The primary structure comprises 660 residues: Acetyl-coenzyme A synthetase (660 aa).

CoA is bound by residues 197-200 (RGGK) and T317. Residues 397-399 (GEP), 421-426 (DTWWQT), D512, and R528 each bind ATP. S536 provides a ligand contact to CoA. An ATP-binding site is contributed by R539. Positions 550, 552, and 555 each coordinate Mg(2+). K625 bears the N6-acetyllysine mark.

It belongs to the ATP-dependent AMP-binding enzyme family. Requires Mg(2+) as cofactor. Acetylated. Deacetylation by the SIR2-homolog deacetylase activates the enzyme.

It carries out the reaction acetate + ATP + CoA = acetyl-CoA + AMP + diphosphate. Its function is as follows. Catalyzes the conversion of acetate into acetyl-CoA (AcCoA), an essential intermediate at the junction of anabolic and catabolic pathways. AcsA undergoes a two-step reaction. In the first half reaction, AcsA combines acetate with ATP to form acetyl-adenylate (AcAMP) intermediate. In the second half reaction, it can then transfer the acetyl group from AcAMP to the sulfhydryl group of CoA, forming the product AcCoA. In Burkholderia mallei (strain NCTC 10247), this protein is Acetyl-coenzyme A synthetase.